A 545-amino-acid polypeptide reads, in one-letter code: MATDLNRKRSATSGSLSVTNPNIKATNRKPARVYSVSSDIVPQALTHPDEDVHLKTSKSPHDAAPRWSQVGFQSIFHDGSNARRSTDSIEEEYSQGTENNDGHSEIGSSSSNRMEGNTTSNDSLFSSNSRGNKRRLSIFTNSKDNMRNRSRSGSKNYGTVITGTSSNNISRSGSKLFHTKSNMSVNSLQSSLSTGHSHSNKGSNVFSKMAKKLLPYKPHNSIGKDDVEPVVPSPFSKFLHSSYGKHRSPVQFIHTSTGGLIDSGKSVYSFNPSINNNPNDTALSLIQDDAFDATNVSLLHDLLKNLPSLIANYKSFTVQELFVLEGNIWGIYCSIVVELFKNKRVWQLPAKIEDIDRLLEFYITLKTQTKAAVTHSRFLAEIEEFITTSLYILENQIVFNYANEDTVNTALKRVGIIWKVFYQQVYYDMMAVLLPFEKSFQKNSNYWLDGYLSEPSRYAPSIDVLLLKCFRDSIILPYYESFLHTNDGASKSFQRYIFSEEEQNGVTEEDKLTLLQCFGILNTIKGNSRNQRIIGELLEGIRMSI.

Disordered stretches follow at residues 1 to 24 (MATDLNRKRSATSGSLSVTNPNIK) and 78 to 166 (DGSN…GTSS). Polar residues-rich tracts occupy residues 11–24 (ATSGSLSVTNPNIK), 106–130 (IGSSSSNRMEGNTTSNDSLFSSNSR), and 151–166 (RSGSKNYGTVITGTSS).

Interacts with the target of rapamycin complex 2 (TORC2) subunit TSC11 and the TORC2 effectors SLM1 and SLM2.

This is Probable target of rapamycin complex 2 subunit BIT2 (BIT2) from Saccharomyces cerevisiae (strain ATCC 204508 / S288c) (Baker's yeast).